Reading from the N-terminus, the 470-residue chain is Flotillin-like protein 1 (470 aa).

C35 is lipidated: S-palmitoyl cysteine. The stretch at 305–354 forms a coiled coil; sequence EYETKVQEANWELYNKQKQAEAVLYEKQKQAEAQKAQADAAFYSKQKEAE.

Belongs to the band 7/mec-2 family. Flotillin subfamily. Post-translationally, may be palmitoylated.

Its subcellular location is the cell membrane. It localises to the membrane. The protein resides in the caveola. Its function is as follows. May act as a scaffolding protein within caveolar membranes, functionally participating in formation of caveolae or caveolae-like vesicles. This chain is Flotillin-like protein 1 (FLOT1), found in Arabidopsis thaliana (Mouse-ear cress).